Here is a 35-residue protein sequence, read N- to C-terminus: uncharacterized protein (35 aa).

A helical transmembrane segment spans residues 10 to 30 (LMITASFFAIFIIIVVSVLLL).

The protein resides in the membrane. This is an uncharacterized protein from Salmonella typhimurium (strain LT2 / SGSC1412 / ATCC 700720).